Here is a 155-residue protein sequence, read N- to C-terminus: Ribosome-binding factor A (155 aa).

Basic and acidic residues-rich tracts occupy residues 116–125 (ARQRDQEVAR) and 142–155 (SPHEGRPESEADGW). The segment at 116-155 (ARQRDQEVARQAEGATPAGDANPYKTSPHEGRPESEADGW) is disordered.

It belongs to the RbfA family. As to quaternary structure, monomer. Binds 30S ribosomal subunits, but not 50S ribosomal subunits or 70S ribosomes.

Its subcellular location is the cytoplasm. In terms of biological role, one of several proteins that assist in the late maturation steps of the functional core of the 30S ribosomal subunit. Associates with free 30S ribosomal subunits (but not with 30S subunits that are part of 70S ribosomes or polysomes). Required for efficient processing of 16S rRNA. May interact with the 5'-terminal helix region of 16S rRNA. In Corynebacterium kroppenstedtii (strain DSM 44385 / JCM 11950 / CIP 105744 / CCUG 35717), this protein is Ribosome-binding factor A.